We begin with the raw amino-acid sequence, 405 residues long: Interferon alpha/beta receptor 1a (405 aa).

Positions 1–20 are cleaved as a signal peptide; sequence MKVGFALVLLWSLPITNVLA. The Extracellular segment spans residues 21–233; sequence ELPQPQNLTL…QTEGDTPYGQ (213 aa). 2 consecutive Fibronectin type-III domains span residues 22–123 and 126–228; these read LPQP…IDAS and PPSR…TEGD. 2 N-linked (GlcNAc...) asparagine glycosylation sites follow: asparagine 27 and asparagine 70. Disulfide bonds link cysteine 75–cysteine 83 and cysteine 201–cysteine 222. Residue asparagine 212 is glycosylated (N-linked (GlcNAc...) asparagine). The helical transmembrane segment at 234-254 threads the bilayer; it reads IFLYFLVSMMVCFLLVLLSSY. The Cytoplasmic segment spans residues 255–405; sequence AFFRFYRGLK…LDEGVVDICV (151 aa). Positions 325-374 are disordered; it reads TAPPSELEQDSGRRIRQDSGDSGIYSTEGGSAQQGRSGGEPIRRDQEVDS. A compositionally biased stretch (basic and acidic residues) spans 334–343; that stretch reads DSGRRIRQDS. Residues 348–359 are compositionally biased toward polar residues; the sequence is IYSTEGGSAQQG.

Belongs to the type II cytokine receptor family. Heterodimer with IFNAR2; forming the receptor for type I interferon.

It localises to the cell membrane. Together with IFNAR2, forms the heterodimeric receptor for type I interferons (including interferons alpha, beta, epsilon, omega and kappa). Type I interferon binding activates the JAK-STAT signaling cascade, resulting in transcriptional activation or repression of interferon-regulated genes that encode the effectors of the interferon response. Mechanistically, type I interferon-binding brings the IFNAR1 and IFNAR2 subunits into close proximity with one another, driving their associated Janus kinases (JAKs) (TYK2 bound to IFNAR1 and JAK1 bound to IFNAR2) to cross-phosphorylate one another. The activated kinases phosphorylate specific tyrosine residues on the intracellular domains of IFNAR1 and IFNAR2, forming docking sites for the STAT transcription factors. STAT proteins are then phosphorylated by the JAKs, promoting their translocation into the nucleus to regulate expression of interferon-regulated genes. The sequence is that of Interferon alpha/beta receptor 1a from Oncorhynchus mykiss (Rainbow trout).